A 499-amino-acid chain; its full sequence is Aspartyl/glutamyl-tRNA(Asn/Gln) amidotransferase subunit B (499 aa).

It belongs to the GatB/GatE family. GatB subfamily. As to quaternary structure, heterotrimer of A, B and C subunits.

It catalyses the reaction L-glutamyl-tRNA(Gln) + L-glutamine + ATP + H2O = L-glutaminyl-tRNA(Gln) + L-glutamate + ADP + phosphate + H(+). It carries out the reaction L-aspartyl-tRNA(Asn) + L-glutamine + ATP + H2O = L-asparaginyl-tRNA(Asn) + L-glutamate + ADP + phosphate + 2 H(+). Allows the formation of correctly charged Asn-tRNA(Asn) or Gln-tRNA(Gln) through the transamidation of misacylated Asp-tRNA(Asn) or Glu-tRNA(Gln) in organisms which lack either or both of asparaginyl-tRNA or glutaminyl-tRNA synthetases. The reaction takes place in the presence of glutamine and ATP through an activated phospho-Asp-tRNA(Asn) or phospho-Glu-tRNA(Gln). This Bifidobacterium longum (strain DJO10A) protein is Aspartyl/glutamyl-tRNA(Asn/Gln) amidotransferase subunit B.